A 439-amino-acid chain; its full sequence is MTEFFKNINKIQFEGTDAINPLAFRHYDAERMILGKSMKEHLRFAACYWHNFCWPGSDVFGAATFDRPWLQSGNAMEMAHMKADAAFDFFSKLGVPYYCFHDTDIAPEGTSLKEYVNNFAQMVDVLEQKQDETGLKLLWGTANAFSNPRYMSGAGTNPDPKVFAYAATQIFNAMGATQRLGGENYVLWGGREGYETLLNTDLRQEREQLGRLMQMVVEHKHKIGFKGTILIEPKPQEPTKHQYDYDTATVYGFLKQFGLENEIKVNIEANHATLAGHSFQHEIATATSLGLFGSIDANRGDPQLGWDTDQFPNSVEENTLVMYEILKAGGFTTGGFNFDSHVRRPSIDAEDLFYGHIGGMDTMALALERAANMIENDVLSKNIAQRYAGWNEDLGKKILSGDHSLETLAKFALDSNIAPVKESGRQEHLENIVNGFIYK.

Catalysis depends on residues His101 and Asp104. Residues Glu232, Glu268, His271, Asp296, Asp307, Asp309, and Asp339 each contribute to the Mg(2+) site.

This sequence belongs to the xylose isomerase family. As to quaternary structure, homotetramer. Mg(2+) serves as cofactor.

It is found in the cytoplasm. It carries out the reaction alpha-D-xylose = alpha-D-xylulofuranose. In Photobacterium profundum (strain SS9), this protein is Xylose isomerase.